Here is a 59-residue protein sequence, read N- to C-terminus: Large ribosomal subunit protein bL32c (59 aa).

The interval 37–59 is disordered; it reads SRSFSSGNEHPKPKGFSGQQTNK.

It belongs to the bacterial ribosomal protein bL32 family.

It is found in the plastid. Its subcellular location is the chloroplast. This is Large ribosomal subunit protein bL32c from Hordeum vulgare (Barley).